The chain runs to 60 residues: Defensin MGD-1 (60 aa).

Cystine bridges form between Cys-4/Cys-25, Cys-10/Cys-33, Cys-14/Cys-35, and Cys-21/Cys-38. Trp-28 carries the 3-hydroxytryptophan modification. Cys-38 carries the cysteine amide modification. The propeptide occupies 39-60; that stretch reads GGRREDVEDIFDIFDNEAADRF.

It belongs to the invertebrate defensin family. Type 2 subfamily. Post-translationally, the hydroxylation of the Trp-28 is not important for the antibacterial activity. In terms of tissue distribution, abundantly expressed in hemocytes.

The protein resides in the secreted. Its function is as follows. Active against both Gram-positive and Gram-negative bacteria but is not cytotoxic towards human erythrocytes or protozoa. The polypeptide is Defensin MGD-1 (FH3) (Mytilus galloprovincialis (Mediterranean mussel)).